The primary structure comprises 384 residues: Guanine nucleotide-binding protein alpha-1 subunit (384 aa).

The interval 1 to 22 (MGSLCSRNKHYSQADDEENTQT) is disordered. Residue G2 is the site of N-myristoyl glycine attachment. Residue C5 is the site of S-palmitoyl cysteine attachment. One can recognise a G-alpha domain in the interval 38–384 (HIQKLLLLGA…RRNLFEAGLL (347 aa)). Residues 41–54 (KLLLLGAGDSGKST) form a G1 motif region. GTP contacts are provided by D49, S50, G51, K52, S53, T54, D163, L188, T194, G222, N288, K289, D291, and A356. S53 is a binding site for Mg(2+). The interval 186 to 194 (DVLFARIRT) is G2 motif. T194 lines the Mg(2+) pocket. Positions 215-224 (YRLFDVGGQR) are G3 motif. The interval 284–291 (MLFLNKFD) is G4 motif. The tract at residues 354 to 359 (TTALDQ) is G5 motif.

It belongs to the G-alpha family. G proteins are composed of 3 units; alpha, beta and gamma. The alpha chain contains the guanine nucleotide binding site. The cofactor is Mg(2+).

Functionally, guanine nucleotide-binding proteins (G proteins) are involved as modulators or transducers in various transmembrane signaling systems. The polypeptide is Guanine nucleotide-binding protein alpha-1 subunit (GPA1) (Solanum tuberosum (Potato)).